A 203-amino-acid polypeptide reads, in one-letter code: Cardiotrophin-1 (203 aa).

The protein belongs to the IL-6 superfamily. In terms of tissue distribution, expressed in the ventricle and atrium of adult rats. Also detected in the lung, kidney, liver, skeletal muscle, stomach and urinary bladder. Not detected in brain, colon, testis, spleen or thymus. Overexpressed in the ventricles in the case of hypertension and hypertrophy.

It localises to the secreted. In terms of biological role, induces cardiac myocyte hypertrophy in vitro. Binds to and activates the ILST/gp130 receptor. The chain is Cardiotrophin-1 (Ctf1) from Rattus norvegicus (Rat).